Here is a 450-residue protein sequence, read N- to C-terminus: Bifunctional protein GlmU (450 aa).

The tract at residues 1–229 is pyrophosphorylase; the sequence is MRRHAIILAA…VEEIMGVNDR (229 aa). UDP-N-acetyl-alpha-D-glucosamine contacts are provided by residues 8 to 11, Lys22, Gln72, and 77 to 78; these read LAAG and GT. A Mg(2+)-binding site is contributed by Asp102. UDP-N-acetyl-alpha-D-glucosamine-binding residues include Gly139, Glu154, and Asn227. Asn227 serves as a coordination point for Mg(2+). A linker region spans residues 230–250; sequence VMLSQAENAMQRRTNHYHMLN. The segment at 251-450 is N-acetyltransferase; that stretch reads GVTIIDPDST…RQTTKEGYRK (200 aa). UDP-N-acetyl-alpha-D-glucosamine is bound by residues Arg332 and Lys350. His362 acts as the Proton acceptor in catalysis. Residues Tyr365 and Asn376 each contribute to the UDP-N-acetyl-alpha-D-glucosamine site. Acetyl-CoA is bound by residues 385–386, Ala422, and Arg439; that span reads NY.

The protein in the N-terminal section; belongs to the N-acetylglucosamine-1-phosphate uridyltransferase family. It in the C-terminal section; belongs to the transferase hexapeptide repeat family. Homotrimer. Mg(2+) is required as a cofactor.

Its subcellular location is the cytoplasm. The enzyme catalyses alpha-D-glucosamine 1-phosphate + acetyl-CoA = N-acetyl-alpha-D-glucosamine 1-phosphate + CoA + H(+). It carries out the reaction N-acetyl-alpha-D-glucosamine 1-phosphate + UTP + H(+) = UDP-N-acetyl-alpha-D-glucosamine + diphosphate. It participates in nucleotide-sugar biosynthesis; UDP-N-acetyl-alpha-D-glucosamine biosynthesis; N-acetyl-alpha-D-glucosamine 1-phosphate from alpha-D-glucosamine 6-phosphate (route II): step 2/2. It functions in the pathway nucleotide-sugar biosynthesis; UDP-N-acetyl-alpha-D-glucosamine biosynthesis; UDP-N-acetyl-alpha-D-glucosamine from N-acetyl-alpha-D-glucosamine 1-phosphate: step 1/1. The protein operates within bacterial outer membrane biogenesis; LPS lipid A biosynthesis. Functionally, catalyzes the last two sequential reactions in the de novo biosynthetic pathway for UDP-N-acetylglucosamine (UDP-GlcNAc). The C-terminal domain catalyzes the transfer of acetyl group from acetyl coenzyme A to glucosamine-1-phosphate (GlcN-1-P) to produce N-acetylglucosamine-1-phosphate (GlcNAc-1-P), which is converted into UDP-GlcNAc by the transfer of uridine 5-monophosphate (from uridine 5-triphosphate), a reaction catalyzed by the N-terminal domain. The protein is Bifunctional protein GlmU of Staphylococcus aureus (strain MRSA252).